Consider the following 81-residue polypeptide: Sulfur carrier protein TusA (81 aa).

Cys20 acts as the Cysteine persulfide intermediate in catalysis.

This sequence belongs to the sulfur carrier protein TusA family.

It is found in the cytoplasm. Its function is as follows. Sulfur carrier protein which probably makes part of a sulfur-relay system. The polypeptide is Sulfur carrier protein TusA (Colwellia psychrerythraea (strain 34H / ATCC BAA-681) (Vibrio psychroerythus)).